Consider the following 878-residue polypeptide: Coatomer subunit gamma (878 aa).

HEAT repeat units follow at residues 64-101 (REAT…VAED), 287-324 (RMLS…THPA), 326-359 (VTTC…GAES), 360-396 (SVER…KYPR), 399-434 (TVLM…ENAD), and 471-508 (ATPS…SCPA).

This sequence belongs to the COPG family. As to quaternary structure, oligomeric complex that consists of at least the alpha, beta, beta', gamma, delta, epsilon and zeta subunits.

Its subcellular location is the cytoplasm. The protein localises to the golgi apparatus membrane. It is found in the cytoplasmic vesicle. The protein resides in the COPI-coated vesicle membrane. It localises to the endoplasmic reticulum. Functionally, the coatomer is a cytosolic protein complex that binds to dilysine motifs and reversibly associates with Golgi non-clathrin-coated vesicles, which further mediate biosynthetic protein transport from the ER, via the Golgi up to the trans Golgi network. Coatomer complex is required for budding from Golgi membranes, and is essential for the retrograde Golgi-to-ER transport of dilysine-tagged proteins. Required for limiting lipid storage in lipid droplets. Involved in the expansion of luminal extracellular matrices and apical membrane during tubulogenesis. Required in the tracheal epithelium for luminal protein secretion and diametric tube growth. In salivary glands, required for deposition of O-glycans and luminal extracellular matrix assembly. Required for epidermal morphogenesis and cuticle development. This Drosophila pseudoobscura pseudoobscura (Fruit fly) protein is Coatomer subunit gamma.